The sequence spans 231 residues: Lipoprotein-releasing system ATP-binding protein LolD (231 aa).

An ABC transporter domain is found at 9–230 (FSLKDVGKEY…LRAGELYDQN (222 aa)). Residue 45 to 52 (GASGSGKS) coordinates ATP.

The protein belongs to the ABC transporter superfamily. Lipoprotein translocase (TC 3.A.1.125) family. As to quaternary structure, the complex is composed of two ATP-binding proteins (LolD) and two transmembrane proteins (LolC and LolE).

Its subcellular location is the cell inner membrane. Its function is as follows. Part of the ABC transporter complex LolCDE involved in the translocation of mature outer membrane-directed lipoproteins, from the inner membrane to the periplasmic chaperone, LolA. Responsible for the formation of the LolA-lipoprotein complex in an ATP-dependent manner. This Oleidesulfovibrio alaskensis (strain ATCC BAA-1058 / DSM 17464 / G20) (Desulfovibrio alaskensis) protein is Lipoprotein-releasing system ATP-binding protein LolD.